A 56-amino-acid chain; its full sequence is Large ribosomal subunit protein bL32 (56 aa).

The disordered stretch occupies residues 1 to 38 (MAVQQNKKSRSRRDMRRSHDALTTAAVSVDKTSGETHL). The span at 7-16 (KKSRSRRDMR) shows a compositional bias: basic residues.

This sequence belongs to the bacterial ribosomal protein bL32 family.

This chain is Large ribosomal subunit protein bL32, found in Histophilus somni (strain 129Pt) (Haemophilus somnus).